Here is a 118-residue protein sequence, read N- to C-terminus: MKKNNSNPLKINEYHTLVNKLFLLIEENIDKNQEKCDIDCELHHNMLIINLNNTNQVIINKQESLKQIWLATKKNGYHFEYINKQWICNRTKKDFWNVLQESCVYQTNKCIQFLKNIY.

The protein belongs to the frataxin family.

Functionally, involved in iron-sulfur (Fe-S) cluster assembly. May act as a regulator of Fe-S biogenesis. The chain is Iron-sulfur cluster assembly protein CyaY from Buchnera aphidicola subsp. Baizongia pistaciae (strain Bp).